The sequence spans 460 residues: A-type ATP synthase subunit B (460 aa).

It belongs to the ATPase alpha/beta chains family. Has multiple subunits, A(3), B(3), C, D, E, F, G, I and K(x); there may be a few other subunits as well.

Its subcellular location is the cell membrane. Component of the A-type ATP synthase that produces ATP from ADP in the presence of a proton gradient across the membrane. The B chain is a regulatory subunit. This chain is A-type ATP synthase subunit B, found in Methanosarcina mazei (strain ATCC BAA-159 / DSM 3647 / Goe1 / Go1 / JCM 11833 / OCM 88) (Methanosarcina frisia).